The following is a 51-amino-acid chain: Large ribosomal subunit protein eL39 (51 aa).

The protein belongs to the eukaryotic ribosomal protein eL39 family. In terms of assembly, part of the 50S ribosomal subunit.

The protein is Large ribosomal subunit protein eL39 of Thermococcus kodakarensis (strain ATCC BAA-918 / JCM 12380 / KOD1) (Pyrococcus kodakaraensis (strain KOD1)).